Reading from the N-terminus, the 156-residue chain is Probable chemoreceptor glutamine deamidase CheD (156 aa).

Belongs to the CheD family.

The enzyme catalyses L-glutaminyl-[protein] + H2O = L-glutamyl-[protein] + NH4(+). Functionally, probably deamidates glutamine residues to glutamate on methyl-accepting chemotaxis receptors (MCPs), playing an important role in chemotaxis. In Bdellovibrio bacteriovorus (strain ATCC 15356 / DSM 50701 / NCIMB 9529 / HD100), this protein is Probable chemoreceptor glutamine deamidase CheD.